We begin with the raw amino-acid sequence, 150 residues long: MAETKIVVGPQPFSVGEEYPWLAERDEDGAVVTFTGKVRNHNLGDSVNALTLEHYPGMTEKALAEIVDEARNRWPLGRVTVIHRIGELWPGDEIVFVGVTSAHRSSAFEAGQFIMDYLKTRAPFWKREATPEGDRWVEARESDQQAAKRW.

Residues 37–39, 103–104, K119, and 126–128 contribute to the substrate site; these read KVR, HR, and KRE. A Glycyl lysine isopeptide (Lys-Gly) (interchain with G-Cter in MoaD) cross-link involves residue K119.

This sequence belongs to the MoaE family. As to quaternary structure, heterotetramer of 2 MoaD subunits and 2 MoaE subunits. Also stable as homodimer. The enzyme changes between these two forms during catalysis.

The catalysed reaction is 2 [molybdopterin-synthase sulfur-carrier protein]-C-terminal-Gly-aminoethanethioate + cyclic pyranopterin phosphate + H2O = molybdopterin + 2 [molybdopterin-synthase sulfur-carrier protein]-C-terminal Gly-Gly + 2 H(+). It participates in cofactor biosynthesis; molybdopterin biosynthesis. In terms of biological role, converts molybdopterin precursor Z to molybdopterin. This requires the incorporation of two sulfur atoms into precursor Z to generate a dithiolene group. The sulfur is provided by MoaD. This Escherichia coli (strain K12) protein is Molybdopterin synthase catalytic subunit (moaE).